The chain runs to 436 residues: Bifunctional IPC transferase and DIPP synthase (436 aa).

A mobA-like NTP transferase region spans residues 11–241 (GVGAAVLAAG…LSEEMVLGWA (231 aa)). Residues 17 to 19 (LAA) and Lys-32 each bind CTP. Residues 242–435 (ASGNDGPVSR…RRLLALKRGR (194 aa)) form a CDP-alcohol phosphatidyltransferases region. 3 helical membrane-spanning segments follow: residues 275 to 295 (VSLLSFALAALGAGLLAAGRL), 349 to 371 (AGTRLAAAAGYPALAGALLVSYT), and 397 to 417 (LAVLALGGLLGAPGAALLATG).

It in the N-terminal section; belongs to the MobA family. In the C-terminal section; belongs to the CDP-alcohol phosphatidyltransferase class-I family.

It localises to the membrane. The catalysed reaction is 1D-myo-inositol 3-phosphate + CTP + H(+) = CDP-1L-myo-inositol + diphosphate. It catalyses the reaction CDP-1L-myo-inositol + 1D-myo-inositol 3-phosphate = bis(1L-myo-inositol) 3,1'-phosphate 1-phosphate + CMP + H(+). Functionally, involved in biosynthesis of di-myo-inositol phosphate (DIP), a widespread organic solute in microorganisms adapted to hot environments. Catalyzes the condensation of CTP and L-myo-inositol-1-phosphate into CDP-L-myo-inositol, as well as the biosynthesis of di-myo-inositol-1,3'-phosphate-1'-phosphate (DIPP) from CDP-L-myo-inositol and L-myo-inositol-1-phosphate. The polypeptide is Bifunctional IPC transferase and DIPP synthase (Rubrobacter xylanophilus (strain DSM 9941 / JCM 11954 / NBRC 16129 / PRD-1)).